The following is a 246-amino-acid chain: Probable septum site-determining protein MinC (246 aa).

This sequence belongs to the MinC family. As to quaternary structure, interacts with MinD and FtsZ.

Functionally, cell division inhibitor that blocks the formation of polar Z ring septums. Rapidly oscillates between the poles of the cell to destabilize FtsZ filaments that have formed before they mature into polar Z rings. Prevents FtsZ polymerization. The protein is Probable septum site-determining protein MinC of Pseudomonas syringae pv. tomato (strain ATCC BAA-871 / DC3000).